The primary structure comprises 425 residues: Raffinose permease (425 aa).

At 1-11 (MNSASTHKNTD) the chain is on the cytoplasmic side. Residues 12–32 (FWIFGLFFFLYFFIMATCFPF) traverse the membrane as a helical segment. The Periplasmic portion of the chain corresponds to 33–48 (LPVWLSDVVGLSKTDT). The chain crosses the membrane as a helical span at residues 49–69 (GIVFSCLSLFAISFQPLLGVI). The Cytoplasmic segment spans residues 70–78 (SDRLGLKKN). The chain crosses the membrane as a helical span at residues 79-99 (LIWSISLLLVFFAPFFLYVFA). The Periplasmic portion of the chain corresponds to 100–105 (PLLHLN). Residues 106 to 126 (IWAGALTGGVFIGFVFSAGAG) traverse the membrane as a helical segment. Residues 127-147 (AIEAYIERVSRSSGFEYGKAR) lie on the Cytoplasmic side of the membrane. Residues 148 to 168 (MFGCLGWALCATMAGILFNVD) traverse the membrane as a helical segment. A topological domain (periplasmic) is located at residue proline 169. The chain crosses the membrane as a helical span at residues 170–190 (SLVFWMGSGGALLLLLLLYLA). The Cytoplasmic segment spans residues 191 to 229 (RPSTSQTAMVMNALGANSSLISTRMVFSLFRMRQMWMFV). A helical transmembrane segment spans residues 230–250 (LYTIGVACVYDVFDQQFAIFF). The Periplasmic segment spans residues 251–265 (RSFFDTPQAGIKAFG). Residues 266–286 (FATTAGEICNAIIMFCTPWII) form a helical membrane-spanning segment. Topologically, residues 287–294 (NRIGAKNT) are cytoplasmic. Residues 295 to 315 (LLVAGGIMTIRITGSAFATTM) form a helical membrane-spanning segment. A topological domain (periplasmic) is located at residue threonine 316. The chain crosses the membrane as a helical span at residues 317–337 (EVVILKMLHALEVPFLLVGAF). Residues 338–351 (KYITGVFDTRLSAT) lie on the Cytoplasmic side of the membrane. A helical membrane pass occupies residues 352–372 (VYLIGFQFSKQLAAILLSTFA). Residues 373-383 (GHLYDRMGFQN) lie on the Periplasmic side of the membrane. Residues 384–404 (TYFVLGMIVLTVTVISAFTLS) traverse the membrane as a helical segment. The Cytoplasmic segment spans residues 405–425 (SSPGIVHPSVEKAPVAHSEIN).

The protein belongs to the major facilitator superfamily. Oligosaccharide:H(+) symporter (OHS) (TC 2.A.1.5) family. As to quaternary structure, monomer.

It localises to the cell inner membrane. Functionally, responsible for transport of raffinose into the cell. Can also transport lactose and melibiose. Has weak activity with maltose. This is Raffinose permease from Escherichia coli.